A 144-amino-acid chain; its full sequence is Large ribosomal subunit protein uL13 (144 aa).

This sequence belongs to the universal ribosomal protein uL13 family. In terms of assembly, part of the 50S ribosomal subunit.

This protein is one of the early assembly proteins of the 50S ribosomal subunit, although it is not seen to bind rRNA by itself. It is important during the early stages of 50S assembly. This is Large ribosomal subunit protein uL13 from Pelotomaculum thermopropionicum (strain DSM 13744 / JCM 10971 / SI).